The following is a 660-amino-acid chain: E3 ubiquitin-protein ligase ORTHRUS 3 (660 aa).

The PHD-type zinc-finger motif lies at 12–63; that stretch reads EGVCMRCKSMPPPEESLTCGTCVTPWHVSCLLSPPETLSATLQWLCPDCSGE. The disordered stretch occupies residues 107–129; sequence QLLSGKGVVDEDDEEEKKKTSKG. An RING-type 1 zinc finger spans residues 141 to 197; that stretch reads CSFCMQSLQKPVSVRVLFALALMLVWFLESTPCGHNACLKCFLKWMGQGHRSCGTCR. A YDG domain is found at 285 to 434; it reads VRNQGLLVGE…CRFLFVRCDN (150 aa). An RING-type 2 zinc finger spans residues 528–585; it reads CQICQKVMTNPVTTPCAHNFCKACLESKFAGTALVRERGSGGRKLRSQKSVMKCPCCP. Residues 593 to 622 are a coiled coil; sequence QNPQVNREVAEVIEKLKKQEEEENAKSLDE. Basic and acidic residues-rich tracts occupy residues 610-621 and 637-646; these read KQEEEENAKSLD and QPKKRIKLDT. The disordered stretch occupies residues 610-660; that stretch reads KQEEEENAKSLDEGQCSGTSHEEEDDEQPKKRIKLDTDAEVSATVVESDMK.

It is found in the nucleus. The catalysed reaction is S-ubiquitinyl-[E2 ubiquitin-conjugating enzyme]-L-cysteine + [acceptor protein]-L-lysine = [E2 ubiquitin-conjugating enzyme]-L-cysteine + N(6)-ubiquitinyl-[acceptor protein]-L-lysine.. The protein operates within protein modification; protein ubiquitination. In terms of biological role, E3 ubiquitin-protein ligase. May participate in CpG methylation-dependent transcriptional regulation. This Arabidopsis thaliana (Mouse-ear cress) protein is E3 ubiquitin-protein ligase ORTHRUS 3 (ORTH3).